Here is a 293-residue protein sequence, read N- to C-terminus: NAD kinase (293 aa).

The active-site Proton acceptor is the Asp68. NAD(+)-binding positions include 68–69 (DG), 142–143 (ND), Arg153, Asp172, and 183–188 (TAYSLS).

Belongs to the NAD kinase family. A divalent metal cation serves as cofactor.

It is found in the cytoplasm. The catalysed reaction is NAD(+) + ATP = ADP + NADP(+) + H(+). Its function is as follows. Involved in the regulation of the intracellular balance of NAD and NADP, and is a key enzyme in the biosynthesis of NADP. Catalyzes specifically the phosphorylation on 2'-hydroxyl of the adenosine moiety of NAD to yield NADP. The polypeptide is NAD kinase (Lachnospira eligens (strain ATCC 27750 / DSM 3376 / VPI C15-48 / C15-B4) (Eubacterium eligens)).